Reading from the N-terminus, the 193-residue chain is Imidazoleglycerol-phosphate dehydratase (193 aa).

The protein belongs to the imidazoleglycerol-phosphate dehydratase family.

It localises to the cytoplasm. The catalysed reaction is D-erythro-1-(imidazol-4-yl)glycerol 3-phosphate = 3-(imidazol-4-yl)-2-oxopropyl phosphate + H2O. It functions in the pathway amino-acid biosynthesis; L-histidine biosynthesis; L-histidine from 5-phospho-alpha-D-ribose 1-diphosphate: step 6/9. This is Imidazoleglycerol-phosphate dehydratase from Staphylococcus carnosus (strain TM300).